A 58-amino-acid polypeptide reads, in one-letter code: ACLARGETCKDDCECCDCDNQCYCPFDWFGGKWHPVGCSCAHANKYFCDHKKEKCKKA.

5 disulfides stabilise this stretch: Cys-2–Cys-16, Cys-9–Cys-22, Cys-15–Cys-40, Cys-24–Cys-38, and Cys-48–Cys-55.

In terms of tissue distribution, expressed by the venom gland.

It is found in the secreted. Its function is as follows. No toxic effects on mice at dose levels of 5 ug per mouse. May be toxic to insects. The polypeptide is U8-ctenitoxin-Pk1a (Phoneutria keyserlingi (Brazilian wandering spider)).